Here is a 1203-residue protein sequence, read N- to C-terminus: DNA-directed RNA polymerase subunit beta' (1203 aa).

Zn(2+) is bound by residues cysteine 60, cysteine 62, cysteine 75, and cysteine 78. Aspartate 449, aspartate 451, and aspartate 453 together coordinate Mg(2+). Zn(2+) contacts are provided by cysteine 818, cysteine 892, cysteine 899, and cysteine 902.

It belongs to the RNA polymerase beta' chain family. As to quaternary structure, the RNAP catalytic core consists of 2 alpha, 1 beta, 1 beta' and 1 omega subunit. When a sigma factor is associated with the core the holoenzyme is formed, which can initiate transcription. The cofactor is Mg(2+). It depends on Zn(2+) as a cofactor.

The catalysed reaction is RNA(n) + a ribonucleoside 5'-triphosphate = RNA(n+1) + diphosphate. Functionally, DNA-dependent RNA polymerase catalyzes the transcription of DNA into RNA using the four ribonucleoside triphosphates as substrates. This is DNA-directed RNA polymerase subunit beta' from Bacillus cereus (strain ZK / E33L).